Here is a 448-residue protein sequence, read N- to C-terminus: Glutamyl-tRNA reductase (448 aa).

Residues threonine 49–arginine 52, serine 109, glutamate 114–glutamine 116, and glutamine 120 each bind substrate. The Nucleophile role is filled by cysteine 50. NADP(+) is bound at residue glycine 189–serine 194.

It belongs to the glutamyl-tRNA reductase family. Homodimer.

The catalysed reaction is (S)-4-amino-5-oxopentanoate + tRNA(Glu) + NADP(+) = L-glutamyl-tRNA(Glu) + NADPH + H(+). Its pathway is porphyrin-containing compound metabolism; protoporphyrin-IX biosynthesis; 5-aminolevulinate from L-glutamyl-tRNA(Glu): step 1/2. Its function is as follows. Catalyzes the NADPH-dependent reduction of glutamyl-tRNA(Glu) to glutamate 1-semialdehyde (GSA). This is Glutamyl-tRNA reductase from Staphylococcus aureus (strain bovine RF122 / ET3-1).